The chain runs to 485 residues: WAS/WASL-interacting protein family member 3 (485 aa).

The span at 1-30 (MPVPPPPPPPLPPPPPPLGAPPPPPPPGPP) shows a compositional bias: pro residues. Residues 1-485 (MPVPPPPPPP…NSQLSLKALR (485 aa)) form a disordered region. Short sequence motifs (profilin-binding motif) lie at residues 3–8 (VPPPPP), 11–16 (LPPPPP), and 20–25 (APPPPP). One can recognise a WH2 domain in the interval 45-62 (GRSALLADIQQGTRLRKV). The residue at position 46 (arginine 46) is an Asymmetric dimethylarginine. The RLRK signature appears at 58-61 (RLRK). Residues 63 to 78 (TQINDRSAPQIESSKG) show a composition bias toward polar residues. Serine 150 is modified (phosphoserine). Pro residues-rich tracts occupy residues 165 to 200 (PVPP…PPAS) and 207 to 243 (VSPP…PLPP). Serine 208 carries the phosphoserine modification. A compositionally biased stretch (low complexity) spans 244–259 (ASALSEKAVRPQLAPL). Pro residues-rich tracts occupy residues 260-275 (HLPP…PPYG) and 293-312 (PPAP…PPLP). Residue serine 394 is modified to Phosphoserine. Residues 396–407 (TTELSSKTQQPG) are compositionally biased toward polar residues. Over residues 417 to 441 (VIDDFESKFTFHSMEDFPPPDEYKP) the composition is skewed to basic and acidic residues. Residues 426 to 450 (TFHSMEDFPPPDEYKPGQKIYPSKV) carry the WASP-binding motif motif. The segment covering 475-485 (RNSQLSLKALR) has biased composition (polar residues).

It belongs to the verprolin family. In terms of assembly, isoform 1 interacts with WASL (via WH1 domain), and monomeric and filamentous actin. In terms of tissue distribution, detected mainly in brain and at lower levels in heart and lung (at protein level). Also detected in testis but not in kidney, liver or spleen.

The protein localises to the cytoplasm. May have a role in spermatogenesis. May be a regulator of cytoskeletal organization. This is WAS/WASL-interacting protein family member 3 (Wipf3) from Rattus norvegicus (Rat).